A 330-amino-acid chain; its full sequence is tRNA-modifying protein YgfZ (330 aa).

Trp28 and Trp190 together coordinate folate.

Belongs to the tRNA-modifying YgfZ family.

The protein localises to the cytoplasm. Its function is as follows. Folate-binding protein involved in regulating the level of ATP-DnaA and in the modification of some tRNAs. It is probably a key factor in regulatory networks that act via tRNA modification, such as initiation of chromosomal replication. This chain is tRNA-modifying protein YgfZ, found in Serratia proteamaculans (strain 568).